A 452-amino-acid polypeptide reads, in one-letter code: Alkane uptake protein A (452 aa).

The signal sequence occupies residues 1–36; it reads MSERSVYMVLSPRFSVRAVSLAVAAVSASLSMPTSA.

It belongs to the OmpP1/FadL family. As to quaternary structure, interacts with the inner membrane protein AupB.

It localises to the cell outer membrane. Functionally, required for growth on alkanes. Probably involved in the uptake of micelle-solubilized alkanes. The protein is Alkane uptake protein A of Marinobacter nauticus (strain ATCC 49840 / DSM 8798 / CIP 103578 / SP17) (Marinobacter hydrocarbonoclasticus).